Consider the following 286-residue polypeptide: MMKKGTIILVAPTAIFSAILLYLVIWNAVMSFMNWSLLNSKPTFVGLETYSIVIRTFQFTNSLLHSIELSVILVVIGNILGIFIAALLYFLNSNKARSTFLSIVIYPLSISMAVNGLIWLWLFNIHIGVDWLLVRIGLPQFPWLSSTSTMFPSLVLVSVWAYTGIAALFYLAGFMNIDKTIVEAARLDGTSAFKILYKILIPNSLNSFIIATALLFLFSFRIFDLPYVLSGGTTNIFLQTSELYMYYLFTVEYFSQATAVATMITLIATIIIIPYALTVIRRWIRR.

Helical transmembrane passes span 6–26, 71–91, 103–123, 154–174, 199–219, and 260–280; these read TIIL…LVIW, VILV…LYFL, IVIY…LWLF, LVLV…LAGF, ILIP…FLFS, and VATM…LTVI. Positions 63–275 constitute an ABC transmembrane type-1 domain; the sequence is LLHSIELSVI…LIATIIIIPY (213 aa).

Belongs to the binding-protein-dependent transport system permease family. As to quaternary structure, the complex is composed of two ATP-binding proteins (GlcV), two transmembrane proteins (GlcT and GlcU) and a solute-binding protein (GlcS).

It is found in the cell membrane. Part of the ABC transporter complex GlcSTUV involved in glucose uptake. Responsible for the translocation of the substrate across the membrane. The protein is Glucose import system permease protein GlcT of Saccharolobus solfataricus (strain ATCC 35092 / DSM 1617 / JCM 11322 / P2) (Sulfolobus solfataricus).